Here is a 152-residue protein sequence, read N- to C-terminus: Ribosome maturation factor RimP (152 aa).

It belongs to the RimP family.

It localises to the cytoplasm. Required for maturation of 30S ribosomal subunits. The polypeptide is Ribosome maturation factor RimP (Rubrobacter xylanophilus (strain DSM 9941 / JCM 11954 / NBRC 16129 / PRD-1)).